We begin with the raw amino-acid sequence, 259 residues long: MWFLILFLALSLGQIDAAPPGQSRVVGGYNCETNSQPWQVAVIGTTFCGGVLIDPSWVITAAHCYSKNYRVLLGRNNLVKDEPFAQRRLVSQSFQHPDYIPVFMRNHTRQRAYDHNNDLMLLHLSKPADITGGVKVIDLPTEEPKVGSICLASGWGMTNPSEMKLSHDLQCVNIHLLSNEKCIETYKNIETDVTLCAGEMDGGKDTCTGDSGGPLICDGVLQGLTSGGATPCAKPKTPAIYAKLIKFTSWIKKVMKENP.

Positions 1–18 are cleaved as a signal peptide; the sequence is MWFLILFLALSLGQIDAA. Positions 19–24 are cleaved as a propeptide — activation peptide; it reads PPGQSR. The Peptidase S1 domain occupies 25–256; the sequence is VVGGYNCETN…FTSWIKKVMK (232 aa). 5 cysteine pairs are disulfide-bonded: Cys-31–Cys-171, Cys-48–Cys-64, Cys-150–Cys-217, Cys-182–Cys-196, and Cys-207–Cys-232. His-63 acts as the Charge relay system in catalysis. Asn-106 is a glycosylation site (N-linked (GlcNAc...) asparagine). The active-site Charge relay system is the Asp-118. Ser-211 serves as the catalytic Charge relay system.

The protein belongs to the peptidase S1 family. Kallikrein subfamily. As to quaternary structure, heterodimer of a light chain and heavy chain linked by a disulfide bond.

It carries out the reaction Preferential cleavage of Arg-|-Xaa bonds in small molecule substrates. Highly selective action to release kallidin (lysyl-bradykinin) from kininogen involves hydrolysis of Met-|-Xaa or Leu-|-Xaa.. In terms of biological role, glandular kallikreins cleave Met-Lys and Arg-Ser bonds in kininogen to release Lys-bradykinin. This enzyme has a vasoconstrictor activity. KLK-9 has both a chymotrypsin-like and a trypsin-like properties. The sequence is that of Submandibular glandular kallikrein-9 (Klk9) from Rattus norvegicus (Rat).